Reading from the N-terminus, the 313-residue chain is 2-phosphoglycerate kinase (313 aa).

One can recognise an ATP-cone domain in the interval 8–95 (NKILVKDKDY…LWRRVLKKHS (88 aa)).

The protein belongs to the 2-phosphoglycerate kinase family. The cofactor is a divalent metal cation.

It carries out the reaction (2R)-2-phosphoglycerate + ATP = (2R)-2,3-bisphosphoglycerate + ADP + H(+). It functions in the pathway thermoadapter biosynthesis; cyclic 2,3-diphosphoglycerate biosynthesis; cyclic 2,3-diphosphoglycerate from 2-phospho-D-glycerate: step 1/2. Catalyzes the phosphorylation of 2-phosphoglycerate to 2,3-diphosphoglycerate. Involved in the biosynthesis of cyclic 2,3-bisphosphoglycerate, a thermoprotectant. This Methanococcus vannielii (strain ATCC 35089 / DSM 1224 / JCM 13029 / OCM 148 / SB) protein is 2-phosphoglycerate kinase.